The following is an 892-amino-acid chain: Alpha-actinin-1 (892 aa).

Residue Met-1 is modified to N-acetylmethionine. The actin-binding stretch occupies residues Met-1–His-247. A Phosphoserine modification is found at Ser-6. Tyr-12 carries the post-translational modification Phosphotyrosine; by FAK1. Calponin-homology (CH) domains lie at Lys-31–Ala-135 and Thr-144–Ser-250. Lys-95 and Lys-195 each carry N6-acetyllysine. Spectrin repeat units lie at residues Gln-274–Asn-384, His-394–Arg-499, Gln-509–Glu-620, and Arg-630–Asn-733. An interaction with DDN region spans residues Gln-274 to Asn-733. Position 471 is a phosphoserine (Ser-471). N6-acetyllysine is present on Lys-676. Residue Ser-677 is modified to Phosphoserine. EF-hand domains are found at residues Glu-746–Asp-781 and Gln-787–Asp-822. Ca(2+) contacts are provided by Asp-759, Asp-761, Ser-763, Thr-765, and Glu-770. Residue Ser-890 is modified to Phosphoserine.

Belongs to the alpha-actinin family. In terms of assembly, homodimer; antiparallel. Interacts with MYOZ2, TTID and LPP. Interacts with DDN. Interacts with PSD. Interacts with MICALL2. Interacts with DNM2 and CTTN. Interacts with PDLIM1. Interacts with PDLIM2. Interacts with PDLIM4 (via PDZ domain). Interacts with IGSF8.

It localises to the cytoplasm. The protein localises to the cytoskeleton. The protein resides in the myofibril. It is found in the sarcomere. Its subcellular location is the z line. It localises to the cell membrane. The protein localises to the cell junction. The protein resides in the cell projection. It is found in the ruffle. F-actin cross-linking protein which is thought to anchor actin to a variety of intracellular structures. Association with IGSF8 regulates the immune synapse formation and is required for efficient T-cell activation. This is Alpha-actinin-1 (ACTN1) from Macaca fascicularis (Crab-eating macaque).